Consider the following 316-residue polypeptide: 4-hydroxy-3-methylbut-2-enyl diphosphate reductase (316 aa).

Residue Cys-12 coordinates [4Fe-4S] cluster. Residues His-41 and His-74 each coordinate (2E)-4-hydroxy-3-methylbut-2-enyl diphosphate. 2 residues coordinate dimethylallyl diphosphate: His-41 and His-74. Positions 41 and 74 each coordinate isopentenyl diphosphate. Cys-96 is a [4Fe-4S] cluster binding site. His-124 is a (2E)-4-hydroxy-3-methylbut-2-enyl diphosphate binding site. Residue His-124 participates in dimethylallyl diphosphate binding. His-124 is a binding site for isopentenyl diphosphate. The active-site Proton donor is the Glu-126. Thr-169 serves as a coordination point for (2E)-4-hydroxy-3-methylbut-2-enyl diphosphate. Residue Cys-199 participates in [4Fe-4S] cluster binding. Ser-227, Ser-228, Asn-229, and Ser-271 together coordinate (2E)-4-hydroxy-3-methylbut-2-enyl diphosphate. Ser-227, Ser-228, Asn-229, and Ser-271 together coordinate dimethylallyl diphosphate. Positions 227, 228, 229, and 271 each coordinate isopentenyl diphosphate.

Belongs to the IspH family. [4Fe-4S] cluster is required as a cofactor.

It carries out the reaction isopentenyl diphosphate + 2 oxidized [2Fe-2S]-[ferredoxin] + H2O = (2E)-4-hydroxy-3-methylbut-2-enyl diphosphate + 2 reduced [2Fe-2S]-[ferredoxin] + 2 H(+). The enzyme catalyses dimethylallyl diphosphate + 2 oxidized [2Fe-2S]-[ferredoxin] + H2O = (2E)-4-hydroxy-3-methylbut-2-enyl diphosphate + 2 reduced [2Fe-2S]-[ferredoxin] + 2 H(+). It functions in the pathway isoprenoid biosynthesis; dimethylallyl diphosphate biosynthesis; dimethylallyl diphosphate from (2E)-4-hydroxy-3-methylbutenyl diphosphate: step 1/1. It participates in isoprenoid biosynthesis; isopentenyl diphosphate biosynthesis via DXP pathway; isopentenyl diphosphate from 1-deoxy-D-xylulose 5-phosphate: step 6/6. Its function is as follows. Catalyzes the conversion of 1-hydroxy-2-methyl-2-(E)-butenyl 4-diphosphate (HMBPP) into a mixture of isopentenyl diphosphate (IPP) and dimethylallyl diphosphate (DMAPP). Acts in the terminal step of the DOXP/MEP pathway for isoprenoid precursor biosynthesis. This Vibrio vulnificus (strain CMCP6) protein is 4-hydroxy-3-methylbut-2-enyl diphosphate reductase.